We begin with the raw amino-acid sequence, 134 residues long: Large ribosomal subunit protein eL14z (134 aa).

The protein belongs to the eukaryotic ribosomal protein eL14 family.

This is Large ribosomal subunit protein eL14z (RPL14A) from Arabidopsis thaliana (Mouse-ear cress).